The primary structure comprises 109 residues: Large ribosomal subunit protein uL22 (109 aa).

The protein belongs to the universal ribosomal protein uL22 family. As to quaternary structure, part of the 50S ribosomal subunit.

In terms of biological role, this protein binds specifically to 23S rRNA; its binding is stimulated by other ribosomal proteins, e.g. L4, L17, and L20. It is important during the early stages of 50S assembly. It makes multiple contacts with different domains of the 23S rRNA in the assembled 50S subunit and ribosome. Its function is as follows. The globular domain of the protein is located near the polypeptide exit tunnel on the outside of the subunit, while an extended beta-hairpin is found that lines the wall of the exit tunnel in the center of the 70S ribosome. This Cupriavidus metallidurans (strain ATCC 43123 / DSM 2839 / NBRC 102507 / CH34) (Ralstonia metallidurans) protein is Large ribosomal subunit protein uL22.